A 491-amino-acid chain; its full sequence is NADH-ubiquinone oxidoreductase chain 2 (491 aa).

Helical transmembrane passes span 11-31 (MIKYSIYILPLIILIVLSISI), 38-58 (VHIIIQSLKLTLIVIMIVIGI), 74-94 (ELIKLFEYLLLGVSYMIIKMF), 106-126 (ITDEGLILIYSSIIGMLISME), 129-149 (NLITLFLSLEISSICFYILAL), 161-181 (LKYYIIGGIATTILLLGIVSI), 210-230 (IALIVLGLILKLGIAPFHGWL), 238-258 (GMLMTFYLTITQKLVTLMVLI), 270-290 (AIMFTNGLIILILVTLVVGTI), 298-318 (LIRFIAYSAIVNSALLILMLA), 330-350 (VYYLINYIIGLTVLMSLIMGF), 375-395 (GAIVYILVLMYLAGLPPMTNF), 411-433 (VYLTMLAFFLSVGVMIYYMNLVK), and 463-483 (IVLGVMWLIFSQLYLDEILNV).

Belongs to the complex I subunit 2 family.

It is found in the mitochondrion inner membrane. The enzyme catalyses a ubiquinone + NADH + 5 H(+)(in) = a ubiquinol + NAD(+) + 4 H(+)(out). Its function is as follows. Core subunit of the mitochondrial membrane respiratory chain NADH dehydrogenase (Complex I) that is believed to belong to the minimal assembly required for catalysis. Complex I functions in the transfer of electrons from NADH to the respiratory chain. The immediate electron acceptor for the enzyme is believed to be ubiquinone. The protein is NADH-ubiquinone oxidoreductase chain 2 (nad2) of Dictyostelium citrinum (Slime mold).